The chain runs to 904 residues: MSRPLPYHIHFFSGLLTCWILCTSSAHKCTVRHEVADCSHLKLTQIPDDLPTNITVLNLTHNQLRRLPPANFTRYSQLTTLDGGFNSISKLEPELCQSLPWLEILNLQHNEISQLSDKTFIFCMNLTELHLMSNSIQKIKNDPFKNLKNLIKLDLSHNGLSSTKLGTQLQLENLQELLLSNNKISSLTPGEFDFLGNSSLKRLELSSNQIKEFSPGCFHTLGELSGLSLNNAKLSPSLTEKLCLELSNTSIENLSLSSNQLDTISHTTFDGLKQTNLTTLDLSRNSLRVMGNDSFAWLPHLEYLSLEYNNIEHLSSRSFYGLSNLRRLDLRRSFTRQSISLTSLPKIDDFSFQWLKCLEYLNMDDNNFPGIKRNTFTGLVRLKFLSLSNSFSSLRTLTNETFLSLAGCPLLLLDLTKNKISKIQSGAFSWLGHLEVLDLGLNEIGQELTGQEWRGLDNIVEIYLSYNKYLELTTNSFTSVPSLQRLMLRRVALKNVDCSPSPFRPLPNLVILDLSNNNIANINDELLKGLEKLEILDLQHNNLARLWKHANPGGPVQFLKGLFHLHILNLGSNGFDEIPVEAFKDLRELKSIDLGMNNLNILPQSVFDNQVSLKSLSLQKNLITSVQKTVFGPAFRNLSYLDMRFNPFDCTCESIAWFVNWINITHTNISELSNHYLCNTPPQYHGYPVMLFDVSPCKDSAPFELLFMININILLIFIFIVLLIHFEGWRISFYWNVSVHRVLGFKEIDRAEQFEYAAYIIHAYKDRDWVWKHSSPMEDEDHTLRFCLEERDFEAGVLELEAIVNSIRRSRKIIFVVTQNLLKDPLCKRFKVHHAVQQAIEQNLDSIILIFLEEIPDYKLNHALCLRRGMFKSHCILNWPVQKERVNAFHHKLKVALGSRNSAH.

The first 26 residues, 1–26 (MSRPLPYHIHFFSGLLTCWILCTSSA), serve as a signal peptide directing secretion. One can recognise an LRRNT domain in the interval 27–52 (HKCTVRHEVADCSHLKLTQIPDDLPT). The Lumenal segment spans residues 27 to 705 (HKCTVRHEVA…PCKDSAPFEL (679 aa)). Cysteine 29 and cysteine 38 are oxidised to a cystine. Asparagine 53, asparagine 58, and asparagine 71 each carry an N-linked (GlcNAc...) asparagine glycan. LRR repeat units lie at residues 53–74 (NITV…NFTR), 77–98 (QLTT…LCQS), 101–122 (WLEI…TFIF), 125–146 (NLTE…PFKN), 149–170 (NLIK…TQLQ), and 173–194 (NLQE…EFDF). An intrachain disulfide couples cysteine 96 to cysteine 123. The N-linked (GlcNAc...) asparagine glycan is linked to asparagine 125. A glycan (N-linked (GlcNAc...) asparagine) is linked at asparagine 197. LRR repeat units follow at residues 199 to 220 (SLKR…CFHT) and 223 to 245 (ELSG…LCLE). N-linked (GlcNAc...) asparagine glycosylation is found at asparagine 248, asparagine 253, asparagine 276, and asparagine 292. LRR repeat units lie at residues 250-271 (SIEN…TFDG), 276-297 (NLTT…SFAW), 300-321 (HLEY…SFYG), 324-345 (NLRR…TSLP), 357-378 (CLEY…TFTG), 381-401 (RLKF…TNET), 409-430 (PLLL…AFSW), 433-455 (HLEV…EWRG), 466-487 (YNKY…QRLM), 508-529 (NLVI…LLKG), 532-553 (KLEI…ANPG), 564-585 (HLHI…AFKD), 588-609 (ELKS…VFDN), and 612-633 (SLKS…VFGP). A glycan (N-linked (GlcNAc...) asparagine) is linked at asparagine 399. Asparagine 637, asparagine 663, and asparagine 668 each carry an N-linked (GlcNAc...) asparagine glycan. In terms of domain architecture, LRRCT spans 646–699 (NPFDCTCESIAWFVNWINITHTNISELSNHYLCNTPPQYHGYPVMLFDVSPCKD). Disulfide bonds link cysteine 650–cysteine 678 and cysteine 652–cysteine 697. Residues 706-726 (LFMININILLIFIFIVLLIHF) traverse the membrane as a helical segment. The Cytoplasmic segment spans residues 727 to 904 (EGWRISFYWN…VALGSRNSAH (178 aa)). A TIR domain is found at 754–897 (FEYAAYIIHA…AFHHKLKVAL (144 aa)). Phosphotyrosine is present on tyrosine 759. Residues lysine 765, lysine 812, and lysine 831 each participate in a glycyl lysine isopeptide (Lys-Gly) (interchain with G-Cter in ubiquitin) cross-link. Tyrosine 858 is modified (phosphotyrosine).

It belongs to the Toll-like receptor family. Monomer and homodimer; dimerization is triggered by ligand-binding, the signaling unit is composed of one ds-RNA of around 40 bp and two TLR3 molecules, and lateral clustering of signaling units along the length of the ds-RNA ligand is required for TLR3 signal transduction. Interacts (via transmembrane domain) with UNC93B1; the interaction is required for transport from the ER to the endosomes. Interacts with TICAM1 (via the TIR domain) in response to poly(I:C) and this interaction is enhanced in the presence of WDFY1. Interacts with SRC; upon binding of double-stranded RNA. The tyrosine-phosphorylated form (via TIR domain) interacts with WDFY1 (via WD repeat 2) in response to poly(I:C). Post-translationally, TLR3 signaling requires a proteolytic cleavage mediated by cathepsins CTSB and CTSH, the cleavage occurs between amino acids 252 and 346. The cleaved form of TLR3 is the predominant form found in endosomes. In terms of processing, ubiquitinated by TRIM3; leading to recognition and sorting of polyubiquitinated TLR3 by the ESCRT complexes. Ubiquitinated by ZNRF1 via 'Lys-63'-linked ubiquitin chains; leading to TLR3 lysosomal trafficking and degradation. Ubiquitinated by RNF170 at Lys-765 via 'Lys-48'-linked ubiquitin chains; leading to TLR3 proteasomal degradation.

The protein resides in the endoplasmic reticulum membrane. It localises to the endosome membrane. Its subcellular location is the early endosome. In terms of biological role, key component of innate and adaptive immunity. TLRs (Toll-like receptors) control host immune response against pathogens through recognition of molecular patterns specific to microorganisms. TLR3 is a nucleotide-sensing TLR which is activated by double-stranded RNA, a sign of viral infection. Acts via the adapter TRIF/TICAM1, leading to NF-kappa-B activation, IRF3 nuclear translocation, cytokine secretion and the inflammatory response. The polypeptide is Toll-like receptor 3 (TLR3) (Bos taurus (Bovine)).